Reading from the N-terminus, the 312-residue chain is Glyoxylate/hydroxypyruvate reductase A (312 aa).

The active site involves arginine 227. Histidine 275 serves as the catalytic Proton donor.

This sequence belongs to the D-isomer specific 2-hydroxyacid dehydrogenase family. GhrA subfamily.

Its subcellular location is the cytoplasm. The enzyme catalyses glycolate + NADP(+) = glyoxylate + NADPH + H(+). The catalysed reaction is (R)-glycerate + NAD(+) = 3-hydroxypyruvate + NADH + H(+). It carries out the reaction (R)-glycerate + NADP(+) = 3-hydroxypyruvate + NADPH + H(+). Functionally, catalyzes the NADPH-dependent reduction of glyoxylate and hydroxypyruvate into glycolate and glycerate, respectively. In Salmonella typhi, this protein is Glyoxylate/hydroxypyruvate reductase A.